Reading from the N-terminus, the 384-residue chain is Protein V (384 aa).

2 disordered regions span residues 1–23 (MDQD…GGRE) and 38–317 (SEPT…TKKG). Residues 7–20 (ILKEDSEVEREAPG) are compositionally biased toward basic and acidic residues. Residues 50–59 (LHNTINTPQG) are compositionally biased toward polar residues. At serine 68 the chain carries Phosphoserine; by host. Residues 83 to 101 (RSGEESRVSGRTSKPEAEA) show a composition bias toward basic and acidic residues. Residue serine 125 is modified to Phosphoserine; by host. Positions 150-168 (GIEDENREMAAHPDKRGED) are enriched in basic and acidic residues. Residues 191–206 (ASNNGRSMEPGSSHSA) are compositionally biased toward polar residues. Residues serine 192, serine 249, serine 257, and serine 260 each carry the phosphoserine; by host modification. Residues histidine 318, cysteine 337, cysteine 341, cysteine 353, cysteine 355, cysteine 358, cysteine 362, and cysteine 365 each contribute to the Zn(2+) site.

This sequence belongs to the paramyxoviruses V protein family. In terms of assembly, interacts with host IFIH1/MDA5 and DHX58/LGP2. Interacts with host IRF3. Interacts with host RIGI regulatory protein (via CARDs domain) and host TRIM25 (via SPRY domain); these interactions prevent TRIM25-mediated ubiquitination of RIG-I and disrupts downstream RIG-I signaling.

Its subcellular location is the host cytoplasm. Its function is as follows. Plays an essential role in the inhibition of host immune response. Prevents the establishment of cellular antiviral state by blocking interferon-alpha/beta (IFN-alpha/beta) production and signaling pathway. Interacts with host IFIH1/MDA5 and DHX58/LGP2 to inhibit the transduction pathway involved in the activation of IFN-beta promoter, thus protecting the virus against cell antiviral state. Also interacts with and inhibits host IRF3. Blocks the type I interferon signaling pathway by disrupting the RIG-I signaling pathway. This is Protein V (P/V/C) from Sendai virus (strain Fushimi) (SeV).